Consider the following 405-residue polypeptide: S-adenosylmethionine:tRNA ribosyltransferase-isomerase (405 aa).

The protein belongs to the QueA family. In terms of assembly, monomer.

The protein localises to the cytoplasm. The catalysed reaction is 7-aminomethyl-7-carbaguanosine(34) in tRNA + S-adenosyl-L-methionine = epoxyqueuosine(34) in tRNA + adenine + L-methionine + 2 H(+). It participates in tRNA modification; tRNA-queuosine biosynthesis. Transfers and isomerizes the ribose moiety from AdoMet to the 7-aminomethyl group of 7-deazaguanine (preQ1-tRNA) to give epoxyqueuosine (oQ-tRNA). The chain is S-adenosylmethionine:tRNA ribosyltransferase-isomerase from Psychrobacter cryohalolentis (strain ATCC BAA-1226 / DSM 17306 / VKM B-2378 / K5).